The chain runs to 448 residues: FAD-dependent monooxygenase srdH (448 aa).

Residues glutamate 32 and arginine 107 each contribute to the FAD site. Glutamine 227 is a catalytic residue. Aspartate 313 provides a ligand contact to FAD.

Belongs to the paxM FAD-dependent monooxygenase family. FAD is required as a cofactor.

Highly reducing polyketide synthase; part of the gene cluster that mediates the biosynthesis of sordarial, a salicylic aldehyde structurally related to the phytotoxin pyriculol. The most interesting aspect of this pathway is formation of an aromatic product from the highly reducing polyketide synthase srdA. SrdA synthesizes a reduced polyketide chain from one molecule of acetyl-CoA and five molecules of malonyl-CoA. The polyketide chain is then reductively released as an aldehyde. The oxidoreductases srdC, srdD and srdE then oxidize one of the hydroxy groups to facilitate the intramolecular aldol condensation, followed by dehydration to yield a salicylic aldehyde. This aldehyde can undergo facile reduction by endogenous reductases to yield the alcohol 1-hydroxy-2-hydroxymethyl-3-pent-1,3-dienylbenzene. The flavin-dependent srdI counteract against the propensity of the aldehydes to be reduced under physiological conditions and is responsible for reoxidizing 1-hydroxy-2-hydroxymethyl-3-pent-1,3-dienylbenzene back to the salicylic aldehyde. This salicylic aldehyde is then selectively epoxidized by the cupin-domain-containing oxidoreductase srdB to yield the epoxide, which can be hydrolyzed stereoselectively by the hydrolase srdG to give the final product sordarial. The polypeptide is FAD-dependent monooxygenase srdH (Neurospora crassa (strain ATCC 24698 / 74-OR23-1A / CBS 708.71 / DSM 1257 / FGSC 987)).